Here is a 58-residue protein sequence, read N- to C-terminus: Large ribosomal subunit protein bL33 (58 aa).

It belongs to the bacterial ribosomal protein bL33 family.

The sequence is that of Large ribosomal subunit protein bL33 from Brachyspira hyodysenteriae (strain ATCC 49526 / WA1).